The chain runs to 73 residues: MAFMKKSLFLVLFLGMVSLSICEEEKRENEDEAKQEDDEQSEMKRGLWSTIKNVGKEAAIAAGKAALGALGEQ.

Residues 1 to 22 (MAFMKKSLFLVLFLGMVSLSIC) form the signal peptide. A propeptide spanning residues 23–43 (EEEKRENEDEAKQEDDEQSEM) is cleaved from the precursor. Positions 25–45 (EKRENEDEAKQEDDEQSEMKR) are disordered. A compositionally biased stretch (acidic residues) spans 30–40 (EDEAKQEDDEQ). Leucine 70 bears the Leucine amide mark. A propeptide spanning residues 72–73 (EQ) is cleaved from the precursor.

As to expression, expressed by the skin glands.

It localises to the secreted. Has antibacterial activity against the Gram-negative bacteria E.coli ATCC 11775 (MIC=0.8 uM), and the Gram-positive bacteria S.aureus ATCC 12600 (MIC=0.4 uM) and M.luteus ATCC 49732 (MIC=0.8 uM). Does not inhibit the growth of the fungus C.albicans. Probably acts by disturbing membrane functions with its amphipathic structure. This Pithecopus azureus (Orange-legged monkey tree frog) protein is Dermaseptin-H4.